The following is a 175-amino-acid chain: Transcription factor E (175 aa).

An HTH TFE/IIEalpha-type domain is found at 3–88 (ENPLIQQVLF…TWKPSLEKVP (86 aa)).

This sequence belongs to the TFE family. As to quaternary structure, monomer. Interaction with RNA polymerase subunits RpoF and RpoE is necessary for Tfe stimulatory transcription activity. Able to interact with Tbp and RNA polymerase in the absence of DNA promoter. Interacts both with the preinitiation and elongation complexes.

In terms of biological role, transcription factor that plays a role in the activation of archaeal genes transcribed by RNA polymerase. Facilitates transcription initiation by enhancing TATA-box recognition by TATA-box-binding protein (Tbp), and transcription factor B (Tfb) and RNA polymerase recruitment. Not absolutely required for transcription in vitro, but particularly important in cases where Tbp or Tfb function is not optimal. It dynamically alters the nucleic acid-binding properties of RNA polymerases by stabilizing the initiation complex and destabilizing elongation complexes. Seems to translocate with the RNA polymerase following initiation and acts by binding to the non template strand of the transcription bubble in elongation complexes. This Methanococcus maripaludis (strain C7 / ATCC BAA-1331) protein is Transcription factor E.